The following is an 809-amino-acid chain: Acyl-homoserine lactone acylase QuiP (809 aa).

A signal peptide spans 1–26 (MASPAFSHFLPRFGVAAAVASALSLA). S261 acts as the Nucleophile in catalysis.

Belongs to the peptidase S45 family. Heterodimer of an alpha subunit and a beta subunit processed from the same precursor.

It is found in the periplasm. The enzyme catalyses an N-acyl-L-homoserine lactone + H2O = L-homoserine lactone + a carboxylate. Catalyzes the deacylation of acyl-homoserine lactone (AHL or acyl-HSL), releasing homoserine lactone (HSL) and the corresponding fatty acid. Possesses a specificity for the degradation of long-chain acyl-HSLs (side chains of seven or more carbons in length). The protein is Acyl-homoserine lactone acylase QuiP (quiP) of Pseudomonas fluorescens (strain ATCC BAA-477 / NRRL B-23932 / Pf-5).